The chain runs to 513 residues: Serine/threonine-protein kinase ppk8 (513 aa).

The span at 98–114 shows a compositional bias: low complexity; it reads LSSTLTSMSEESSSTES. Positions 98–120 are disordered; sequence LSSTLTSMSEESSSTESKFATLN. In terms of domain architecture, Protein kinase spans 241-505; it reads GKLNNVIGEG…ISGARSTTWM (265 aa). ATP is bound by residues 247-255 and Lys270; that span reads IGEGASSFI. The active-site Proton acceptor is the Asp364.

It belongs to the protein kinase superfamily. Ser/Thr protein kinase family.

The protein localises to the cytoplasm. It is found in the nucleus. It catalyses the reaction L-seryl-[protein] + ATP = O-phospho-L-seryl-[protein] + ADP + H(+). The catalysed reaction is L-threonyl-[protein] + ATP = O-phospho-L-threonyl-[protein] + ADP + H(+). The protein is Serine/threonine-protein kinase ppk8 (ppk8) of Schizosaccharomyces pombe (strain 972 / ATCC 24843) (Fission yeast).